The primary structure comprises 279 residues: MTKQIIVTDSTSDLSKEYLEANNIHVIPLSLTIEGASYVDQVDITSEEFINHIENDEDVKTSQPAIGEFISAYEELGKDGSEIISIHLSSGLSGTFNTAYQASQMVDANVTVIDSKSISFGLGYQIQHLVELVKEGVSTSEIVKKLNHLRENIKLFVVIGQLNQLIKGGRISKTKGLIGNLMKIKPIGTLDDGRLELVHNARTQNSSIQYLKKEIAEFIGDHEIKSVGVAHANVIEYVDKLKKVFNEAFHVDNYDINVTTPVISAHTGQGAIGLVVLKK.

In terms of domain architecture, DegV spans 4 to 278 (QIIVTDSTSD…QGAIGLVVLK (275 aa)). Residues Thr-61 and Ser-93 each coordinate hexadecanoate.

Functionally, may bind long-chain fatty acids, such as palmitate, and may play a role in lipid transport or fatty acid metabolism. This is DegV domain-containing protein SAR1438 from Staphylococcus aureus (strain MRSA252).